A 387-amino-acid polypeptide reads, in one-letter code: S-adenosylmethionine synthase (387 aa).

His-16 contributes to the ATP binding site. Asp-18 is a Mg(2+) binding site. K(+) is bound at residue Glu-44. Positions 57 and 100 each coordinate L-methionine. The tract at residues 100–110 (QSPDIAQGVDR) is flexible loop. ATP-binding positions include 167–169 (DAK), 232–233 (RF), Asp-241, 247–248 (RK), Ala-264, and Lys-268. Asp-241 provides a ligand contact to L-methionine. Lys-272 is a binding site for L-methionine.

This sequence belongs to the AdoMet synthase family. In terms of assembly, homotetramer; dimer of dimers. The cofactor is Mg(2+). It depends on K(+) as a cofactor.

The protein resides in the cytoplasm. The enzyme catalyses L-methionine + ATP + H2O = S-adenosyl-L-methionine + phosphate + diphosphate. The protein operates within amino-acid biosynthesis; S-adenosyl-L-methionine biosynthesis; S-adenosyl-L-methionine from L-methionine: step 1/1. In terms of biological role, catalyzes the formation of S-adenosylmethionine (AdoMet) from methionine and ATP. The overall synthetic reaction is composed of two sequential steps, AdoMet formation and the subsequent tripolyphosphate hydrolysis which occurs prior to release of AdoMet from the enzyme. This is S-adenosylmethionine synthase from Cupriavidus metallidurans (strain ATCC 43123 / DSM 2839 / NBRC 102507 / CH34) (Ralstonia metallidurans).